The primary structure comprises 547 residues: CTP synthase (547 aa).

Residues 1-265 (MARFIFITGG…DQAVLDAFQI (265 aa)) are amidoligase domain. S13 contributes to the CTP binding site. A UTP-binding site is contributed by S13. ATP-binding positions include 14–19 (SLGKGL) and D71. Mg(2+) is bound by residues D71 and E139. CTP-binding positions include 146 to 148 (DIE), 186 to 191 (KTKPTQ), and K222. Residues 186–191 (KTKPTQ) and K222 contribute to the UTP site. One can recognise a Glutamine amidotransferase type-1 domain in the interval 291-546 (KIAIVGKYVQ…VRAAKESSRL (256 aa)). G353 provides a ligand contact to L-glutamine. C380 serves as the catalytic Nucleophile; for glutamine hydrolysis. Residues 381–384 (LGMQ), E404, and R474 each bind L-glutamine. Residues H519 and E521 contribute to the active site.

Belongs to the CTP synthase family. In terms of assembly, homotetramer.

It carries out the reaction UTP + L-glutamine + ATP + H2O = CTP + L-glutamate + ADP + phosphate + 2 H(+). It catalyses the reaction L-glutamine + H2O = L-glutamate + NH4(+). The catalysed reaction is UTP + NH4(+) + ATP = CTP + ADP + phosphate + 2 H(+). The protein operates within pyrimidine metabolism; CTP biosynthesis via de novo pathway; CTP from UDP: step 2/2. With respect to regulation, allosterically activated by GTP, when glutamine is the substrate; GTP has no effect on the reaction when ammonia is the substrate. The allosteric effector GTP functions by stabilizing the protein conformation that binds the tetrahedral intermediate(s) formed during glutamine hydrolysis. Inhibited by the product CTP, via allosteric rather than competitive inhibition. Its function is as follows. Catalyzes the ATP-dependent amination of UTP to CTP with either L-glutamine or ammonia as the source of nitrogen. Regulates intracellular CTP levels through interactions with the four ribonucleotide triphosphates. This Ruegeria pomeroyi (strain ATCC 700808 / DSM 15171 / DSS-3) (Silicibacter pomeroyi) protein is CTP synthase.